Consider the following 144-residue polypeptide: Large ribosomal subunit protein uL14 (144 aa).

The tract at residues 107 to 144 is disordered; sequence NEGYTHSQHSNQREGGERIQAQPSPPHARRAVKTSFCR.

Belongs to the universal ribosomal protein uL14 family. Part of the 50S ribosomal subunit. Forms a cluster with proteins L3 and L19. In the 70S ribosome, L14 and L19 interact and together make contacts with the 16S rRNA in bridges B5 and B8.

Functionally, binds to 23S rRNA. Forms part of two intersubunit bridges in the 70S ribosome. The sequence is that of Large ribosomal subunit protein uL14 from Xanthobacter autotrophicus (strain ATCC BAA-1158 / Py2).